The primary structure comprises 269 residues: Hydroxyethylthiazole kinase (269 aa).

Residue Met45 coordinates substrate. Residues Arg121 and Thr167 each coordinate ATP. Gly194 lines the substrate pocket.

It belongs to the Thz kinase family. Mg(2+) serves as cofactor.

It catalyses the reaction 5-(2-hydroxyethyl)-4-methylthiazole + ATP = 4-methyl-5-(2-phosphooxyethyl)-thiazole + ADP + H(+). It functions in the pathway cofactor biosynthesis; thiamine diphosphate biosynthesis; 4-methyl-5-(2-phosphoethyl)-thiazole from 5-(2-hydroxyethyl)-4-methylthiazole: step 1/1. Its function is as follows. Catalyzes the phosphorylation of the hydroxyl group of 4-methyl-5-beta-hydroxyethylthiazole (THZ). The polypeptide is Hydroxyethylthiazole kinase (Bacillus licheniformis (strain ATCC 14580 / DSM 13 / JCM 2505 / CCUG 7422 / NBRC 12200 / NCIMB 9375 / NCTC 10341 / NRRL NRS-1264 / Gibson 46)).